The sequence spans 368 residues: tRNA-cytidine(32) 2-sulfurtransferase (368 aa).

The PP-loop motif motif lies at 95 to 100; it reads SGGKDS. Cys170, Cys173, and Cys261 together coordinate [4Fe-4S] cluster.

This sequence belongs to the TtcA family. In terms of assembly, homodimer. It depends on Mg(2+) as a cofactor. The cofactor is [4Fe-4S] cluster.

The protein localises to the cytoplasm. The enzyme catalyses cytidine(32) in tRNA + S-sulfanyl-L-cysteinyl-[cysteine desulfurase] + AH2 + ATP = 2-thiocytidine(32) in tRNA + L-cysteinyl-[cysteine desulfurase] + A + AMP + diphosphate + H(+). It participates in tRNA modification. Catalyzes the ATP-dependent 2-thiolation of cytidine in position 32 of tRNA, to form 2-thiocytidine (s(2)C32). The sulfur atoms are provided by the cysteine/cysteine desulfurase (IscS) system. In Psychrobacter sp. (strain PRwf-1), this protein is tRNA-cytidine(32) 2-sulfurtransferase.